The chain runs to 378 residues: C-C chemokine receptor type 7 (378 aa).

The N-terminal stretch at Met1–Cys24 is a signal peptide. Topologically, residues Gln25 to Trp59 are extracellular. Asn36 carries an N-linked (GlcNAc...) asparagine glycan. Residues Phe60–Phe86 traverse the membrane as a helical segment. The Cytoplasmic segment spans residues Lys87–Thr95. The chain crosses the membrane as a helical span at residues Tyr96–Tyr116. Residues Ser117–Lys130 are Extracellular-facing. Cysteines 129 and 210 form a disulfide. A helical membrane pass occupies residues Leu131–Ile152. Residues Asp153–Arg170 are Cytoplasmic-facing. Residues Val171–Ile191 form a helical membrane-spanning segment. At Pro192–Ala219 the chain is on the extracellular side. Residues Phe220–Ile247 form a helical membrane-spanning segment. Topologically, residues Arg248 to Lys263 are cytoplasmic. The chain crosses the membrane as a helical span at residues Val264 to Ala289. Residues Asn290 to Ser313 are Extracellular-facing. A helical transmembrane segment spans residues Leu314–Val331. Residues Lys332 to Pro378 lie on the Cytoplasmic side of the membrane.

Belongs to the G-protein coupled receptor 1 family. As to expression, expressed in various lymphoid tissues and activated B- and T-lymphocytes, strongly up-regulated in B-cells infected with Epstein-Barr virus and T-cells infected with herpesvirus 6 or 7.

It is found in the cell membrane. Its function is as follows. Receptor for the MIP-3-beta chemokine. Probable mediator of EBV effects on B-lymphocytes or of normal lymphocyte functions. In Homo sapiens (Human), this protein is C-C chemokine receptor type 7 (CCR7).